The chain runs to 352 residues: 4-hydroxy-3-methylbut-2-en-1-yl diphosphate synthase (flavodoxin) (352 aa).

Residues C265, C268, C300, and E307 each contribute to the [4Fe-4S] cluster site.

This sequence belongs to the IspG family. It depends on [4Fe-4S] cluster as a cofactor.

It carries out the reaction (2E)-4-hydroxy-3-methylbut-2-enyl diphosphate + oxidized [flavodoxin] + H2O + 2 H(+) = 2-C-methyl-D-erythritol 2,4-cyclic diphosphate + reduced [flavodoxin]. It participates in isoprenoid biosynthesis; isopentenyl diphosphate biosynthesis via DXP pathway; isopentenyl diphosphate from 1-deoxy-D-xylulose 5-phosphate: step 5/6. Functionally, converts 2C-methyl-D-erythritol 2,4-cyclodiphosphate (ME-2,4cPP) into 1-hydroxy-2-methyl-2-(E)-butenyl 4-diphosphate. In Persephonella marina (strain DSM 14350 / EX-H1), this protein is 4-hydroxy-3-methylbut-2-en-1-yl diphosphate synthase (flavodoxin).